The chain runs to 231 residues: Ion-translocating oxidoreductase complex subunit E (231 aa).

The next 6 membrane-spanning stretches (helical) occupy residues alanine 18–alanine 38, leucine 39–leucine 59, threonine 63–valine 83, leucine 86–valine 106, alanine 125–leucine 145, and proline 182–glycine 202.

It belongs to the NqrDE/RnfAE family. In terms of assembly, the complex is composed of six subunits: RsxA, RsxB, RsxC, RsxD, RsxE and RsxG.

Its subcellular location is the cell inner membrane. Part of a membrane-bound complex that couples electron transfer with translocation of ions across the membrane. Required to maintain the reduced state of SoxR. The protein is Ion-translocating oxidoreductase complex subunit E of Escherichia coli O7:K1 (strain IAI39 / ExPEC).